The sequence spans 258 residues: Glucanase inhibitor protein 1 (258 aa).

Positions 1–19 (MRVVPTLAAASLALGAVAG) are cleaved as a signal peptide. The region spanning 27 to 254 (ILGGGEVPIG…AIEWITSVTK (228 aa)) is the Peptidase S1 domain. The cysteines at positions 54 and 70 are disulfide-linked. 5 N-linked (GlcNAc...) asparagine glycosylation sites follow: N87, N102, N107, N157, and N185. Intrachain disulfides connect C177/C189 and C199/C230.

It belongs to the peptidase S1 family. Forms an apoplastic complex with host endoglucanases in tomato leaves during P.infestans infection.

Its subcellular location is the secreted. Its function is as follows. Secreted effector that suppresses host plant glucan elicitor-mediated defense responses. Targets host endoglucanases and inhibits the endoglucanase-mediated release of elicitor-active glucan oligosaccharides from P.infestans cell walls. The sequence is that of Glucanase inhibitor protein 1 from Phytophthora infestans (Potato late blight agent).